We begin with the raw amino-acid sequence, 276 residues long: Light-independent protochlorophyllide reductase iron-sulfur ATP-binding protein (276 aa).

ATP contacts are provided by residues 12 to 17 and lysine 41; that span reads GIGKST. Mg(2+) is bound at residue serine 16. Residues cysteine 97 and cysteine 131 each contribute to the [4Fe-4S] cluster site. ATP is bound at residue 182–183; it reads NR.

The protein belongs to the NifH/BchL/ChlL family. Homodimer. Protochlorophyllide reductase is composed of three subunits; BchL, BchN and BchB. [4Fe-4S] cluster serves as cofactor.

It carries out the reaction chlorophyllide a + oxidized 2[4Fe-4S]-[ferredoxin] + 2 ADP + 2 phosphate = protochlorophyllide a + reduced 2[4Fe-4S]-[ferredoxin] + 2 ATP + 2 H2O. Its pathway is porphyrin-containing compound metabolism; bacteriochlorophyll biosynthesis (light-independent). Component of the dark-operative protochlorophyllide reductase (DPOR) that uses Mg-ATP and reduced ferredoxin to reduce ring D of protochlorophyllide (Pchlide) to form chlorophyllide a (Chlide). This reaction is light-independent. The L component serves as a unique electron donor to the NB-component of the complex, and binds Mg-ATP. In Chlorobaculum tepidum (strain ATCC 49652 / DSM 12025 / NBRC 103806 / TLS) (Chlorobium tepidum), this protein is Light-independent protochlorophyllide reductase iron-sulfur ATP-binding protein.